We begin with the raw amino-acid sequence, 178 residues long: MQKIVILRLGHRPERDKRITTHVGLTARALGAEGMLLASNDKGIKNAIEDVAERWGGDFYVENDVNWKSEIEKWKEEGGKVCHLSMYGINLPDAAGEIKLCDKLMIVVGAEKVPTEIYDLADWNVAIGNQPHSEVAAVALTMDRIAQEEPLKREFGYAELTIVPMERGKRVINNVKEE.

S-adenosyl-L-methionine contacts are provided by residues leucine 84, 109-113, and 127-134; these read GAEKV and IGNQPHSE.

This sequence belongs to the aTrm56 family. As to quaternary structure, homodimer.

Its subcellular location is the cytoplasm. It carries out the reaction cytidine(56) in tRNA + S-adenosyl-L-methionine = 2'-O-methylcytidine(56) in tRNA + S-adenosyl-L-homocysteine + H(+). Specifically catalyzes the AdoMet-dependent 2'-O-ribose methylation of cytidine at position 56 in tRNAs. The polypeptide is tRNA (cytidine(56)-2'-O)-methyltransferase (Methanococcoides burtonii (strain DSM 6242 / NBRC 107633 / OCM 468 / ACE-M)).